The primary structure comprises 256 residues: 2-C-methyl-D-erythritol 4-phosphate cytidylyltransferase (256 aa).

This sequence belongs to the IspD/TarI cytidylyltransferase family. IspD subfamily.

It carries out the reaction 2-C-methyl-D-erythritol 4-phosphate + CTP + H(+) = 4-CDP-2-C-methyl-D-erythritol + diphosphate. Its pathway is isoprenoid biosynthesis; isopentenyl diphosphate biosynthesis via DXP pathway; isopentenyl diphosphate from 1-deoxy-D-xylulose 5-phosphate: step 2/6. Functionally, catalyzes the formation of 4-diphosphocytidyl-2-C-methyl-D-erythritol from CTP and 2-C-methyl-D-erythritol 4-phosphate (MEP). The sequence is that of 2-C-methyl-D-erythritol 4-phosphate cytidylyltransferase from Corynebacterium glutamicum (strain R).